Consider the following 185-residue polypeptide: Elongation factor P (185 aa).

This sequence belongs to the elongation factor P family.

It is found in the cytoplasm. It participates in protein biosynthesis; polypeptide chain elongation. In terms of biological role, involved in peptide bond synthesis. Stimulates efficient translation and peptide-bond synthesis on native or reconstituted 70S ribosomes in vitro. Probably functions indirectly by altering the affinity of the ribosome for aminoacyl-tRNA, thus increasing their reactivity as acceptors for peptidyl transferase. This is Elongation factor P from Streptococcus uberis (strain ATCC BAA-854 / 0140J).